A 510-amino-acid chain; its full sequence is Photosystem II CP47 reaction center protein (510 aa).

Topologically, residues 2–16 (GLPWYRVHTVLINDP) are cytoplasmic. A helical membrane pass occupies residues 17-37 (GRLIAAHLMHTALVAGWAGSM). Over 38 to 94 (ALYELATFDPSDPVLNPMWRQGMFVLPFMARLGVTGSWSGWSITGETGIDPGFWSFE) the chain is Lumenal. The chain crosses the membrane as a helical span at residues 95–116 (GVALAHIVLSGLLFLAACWHWV). Residues 117 to 134 (YWDLELFRDPRTGEPALD) are Cytoplasmic-facing. Residues 135-157 (LPKMFGIHLFLAGLLCFGFGAFH) form a helical membrane-spanning segment. Topologically, residues 158–196 (LTGLFGPGMWVSDPYGLTGSVQPVAPEWGPDGFNPYNPG) are lumenal. A helical membrane pass occupies residues 197–218 (GVVAHHIAAGIVGIIAGLFHIL). At 219–233 (VRPPQRLYKALRMGN) the chain is on the cytoplasmic side. The chain crosses the membrane as a helical span at residues 234 to 254 (IETVLSSSIAAVFFAAFVVAG). Residues 255–450 (TMWYGSATTP…GIFRTSPRGW (196 aa)) are Lumenal-facing. Residues 451–473 (FTFAHAVFALLFFFGHIWHGART) traverse the membrane as a helical segment. Residues 474–510 (LFRDVFSGIDPELSPEQVEWGFYQKVGDVTTRRKEAV) are Cytoplasmic-facing.

PSII is composed of 1 copy each of membrane proteins PsbA, PsbB, PsbC, PsbD, PsbE, PsbF, PsbH, PsbI, PsbJ, PsbK, PsbL, PsbM, PsbT, PsbX, PsbY, PsbZ, Psb30/Ycf12, peripheral proteins PsbO, CyanoQ (PsbQ), PsbU, PsbV and a large number of cofactors. It forms dimeric complexes. Part of a photosystem II (PSII) assembly intermediate complex PSII-I; crystallized from a strain deleted of psbJ, it forms monomeric PSII before addition of the oxygen evolving complex. PSII-I includes 3 assembly factors not found in mature PSII (Psb27, Psb28 and Psb34). The cofactor is Binds multiple chlorophylls. PSII binds additional chlorophylls, carotenoids and specific lipids..

The protein localises to the cellular thylakoid membrane. Functionally, one of the components of the core complex of photosystem II (PSII). It binds chlorophyll and helps catalyze the primary light-induced photochemical processes of PSII. PSII is a light-driven water:plastoquinone oxidoreductase, using light energy to abstract electrons from H(2)O, generating O(2) and a proton gradient subsequently used for ATP formation. This chain is Photosystem II CP47 reaction center protein, found in Thermosynechococcus vestitus (strain NIES-2133 / IAM M-273 / BP-1).